The following is a 142-amino-acid chain: DNA-directed RNA polymerase II subunit RPB4 (142 aa).

It belongs to the eukaryotic RPB4 RNA polymerase subunit family. Component of the RNA polymerase II (Pol II) core complex consisting of 12 subunits: a ten-subunit catalytic core composed of POLR2A/RPB1, POLR2B/RPB2, POLR2C/RPB3, POLR2I/RPB9, POLR2J/RPB11, POLR2E/RPABC1, POLR2F/RPABC2, POLR2H/RPABC3, POLR2K/RPABC4 and POLR2L/RPABC5 and a mobile stalk composed of two subunits POLR2D/RPB4 and POLR2G/RPB7, protruding from the core and functioning primarily in transcription initiation. Part of Pol II(G) complex, in which Pol II core associates with an additional subunit POLR2M; unlike conventional Pol II, Pol II(G) functions as a transcriptional repressor. Part of TBP-based Pol II pre-initiation complex (PIC), in which Pol II core assembles with general transcription factors and other specific initiation factors including GTF2E1, GTF2E2, GTF2F1, GTF2F2, TCEA1, ERCC2, ERCC3, GTF2H2, GTF2H3, GTF2H4, GTF2H5, GTF2A1, GTF2A2, GTF2B and TBP; this large multi-subunit PIC complex mediates DNA unwinding and targets Pol II core to the transcription start site where the first phosphodiester bond forms.

It is found in the nucleus. Its function is as follows. Core component of RNA polymerase II (Pol II), a DNA-dependent RNA polymerase which synthesizes mRNA precursors and many functional non-coding RNAs using the four ribonucleoside triphosphates as substrates. Pol II is the central component of the basal RNA polymerase II transcription machinery. It is composed of mobile elements that move relative to each other. POLR2D/RPB4 is part of a subcomplex with POLR2G/RPB7 that binds to a pocket formed by POLR2A/RPB1, POLR2B/RPB2 and POLR2F/RPABC2 at the base of the clamp element. The POLR2D/RPB4-POLR2G/RPB7 subcomplex seems to lock the clamp via POLR2G/RPB7 in the closed conformation thus preventing double-stranded DNA to enter the active site cleft. The POLR2D/RPB4-POLR2G/RPB7 subcomplex binds single-stranded DNA and RNA. In Homo sapiens (Human), this protein is DNA-directed RNA polymerase II subunit RPB4 (POLR2D).